Consider the following 387-residue polypeptide: MEELLMNRFVEIFGEKGTACYFAPGRINLIGEHTDYNGGHVFPAAITLGTFGVARKRDDQKIRMFSDNFKEVGLIEFSLEDLTYSDSDDWANYPKGVLNYLIESGHNIDSGLDVLFYGTIPNGAGLSSSASIELLMGTICNDLYALHCPMLELVQIGKKVENEFIGVNSGIMDQFAVGMGEKDQAILLDTNNMHYEMVPAKLGEYTIVIMNTNKRRELADSKYNERRAECEEAVRLLQKELSIEFLGELDSETFEQYQALIGDPALIKRARHAVTENERTLLAKQALTEGDLEEFGLLLNASHRSLKEDYEVTGIELDTLVACAQEQPGVLGARMTGAGFGGCSIALVPKQNIDAFIEAVGQSYQDKIGYAADFYPASIDDGARKLF.

32–35 (EHTD) provides a ligand contact to substrate. ATP contacts are provided by residues Ser-66 and 123–129 (GAGLSSS). Ser-129 and Glu-161 together coordinate Mg(2+). Residue Asp-173 is the Proton acceptor of the active site. Tyr-223 contributes to the substrate binding site.

This sequence belongs to the GHMP kinase family. GalK subfamily.

It localises to the cytoplasm. It catalyses the reaction alpha-D-galactose + ATP = alpha-D-galactose 1-phosphate + ADP + H(+). The protein operates within carbohydrate metabolism; galactose metabolism. In terms of biological role, catalyzes the transfer of the gamma-phosphate of ATP to D-galactose to form alpha-D-galactose-1-phosphate (Gal-1-P). The polypeptide is Galactokinase (Enterococcus faecalis (strain ATCC 700802 / V583)).